The following is a 67-amino-acid chain: MKLLLLTLAALLLVSQLTPGDAQKCWNLHGKCRHRCSRKESVYVYCTNGKMCCVKPKYQPKPKPWMF.

The signal sequence occupies residues 1–22 (MKLLLLTLAALLLVSQLTPGDA). Cystine bridges form between Cys25–Cys52, Cys32–Cys46, and Cys36–Cys53.

It belongs to the beta-defensin family.

It is found in the secreted. Has antibacterial activity. The polypeptide is Beta-defensin 36 (Defb36) (Mus musculus (Mouse)).